The chain runs to 238 residues: Transcriptional activator protein AnoR (238 aa).

An HTH luxR-type domain is found at 170–236; sequence EFSQFNLYLT…SAAIRAVMLG (67 aa). A DNA-binding region (H-T-H motif) is located at residues 195–214; the sequence is SAEIAQIIGVTERTVNFHLC.

This sequence belongs to the autoinducer-regulated transcriptional regulatory protein family.

Positively regulates the expression of anoI. Required for biofilm formation and motility. Probably part of a quorum-sensing system with AnoI. The sequence is that of Transcriptional activator protein AnoR from Acinetobacter nosocomialis.